Consider the following 70-residue polypeptide: Small ribosomal subunit protein bS21 (70 aa).

It belongs to the bacterial ribosomal protein bS21 family.

The sequence is that of Small ribosomal subunit protein bS21 from Nitratiruptor sp. (strain SB155-2).